The sequence spans 517 residues: Maturase K (517 aa).

Belongs to the intron maturase 2 family. MatK subfamily.

Its subcellular location is the plastid. The protein localises to the chloroplast. In terms of biological role, usually encoded in the trnK tRNA gene intron. Probably assists in splicing its own and other chloroplast group II introns. The polypeptide is Maturase K (Phalaenopsis japonica (Orchid)).